Here is a 433-residue protein sequence, read N- to C-terminus: Ligand-dependent corepressor (433 aa).

Residues 1–51 (MQRMIQQFAAEYTSKNSSTQDPSQPNSTKNQSLPKASPVTTSPTAATTQNP) are disordered. The span at 13-34 (TSKNSSTQDPSQPNSTKNQSLP) shows a compositional bias: polar residues. Over residues 36-48 (ASPVTTSPTAATT) the composition is skewed to low complexity. Ser42 carries the post-translational modification Phosphoserine. The Interaction with nuclear receptors motif lies at 53-57 (LSKLL). Ser63 is subject to Phosphoserine. The segment at 64–147 (PLDLTVRKSQ…GTREGFGHST (84 aa)) is disordered. Positions 93–110 (AGSTSLSHSPGCSSTQGN) are enriched in polar residues. Ser249 is modified (phosphoserine). A Glycyl lysine isopeptide (Lys-Gly) (interchain with G-Cter in SUMO2) cross-link involves residue Lys254. The tract at residues 299 to 348 (QSRKSMLDAGPDSWGSDAEQSTSGQPYPTSDQEGDPGSKQPRKKRGRYRQ) is disordered. Polar residues predominate over residues 316–329 (AEQSTSGQPYPTSD). A Nuclear localization signal motif is present at residues 339–345 (PRKKRGR). The 53-residue stretch at 340-392 (RKKRGRYRQYNSEILEEAISVVMSGKMSVSKAQSIYGIPHSTLEYKVKERLGT) folds into the HTH psq-type domain. Residue Arg345 forms a Glycyl lysine isopeptide (Lys-Gly) (interchain with G-Cter in SUMO2) linkage. Residues 368-388 (VSKAQSIYGIPHSTLEYKVKE) constitute a DNA-binding region (H-T-H motif). Gly391 participates in a covalent cross-link: Glycyl lysine isopeptide (Lys-Gly) (interchain with G-Cter in SUMO2). The disordered stretch occupies residues 393–412 (LKNPPKKKMKLMRSEGPDVS). Residue Lys414 forms a Glycyl lysine isopeptide (Lys-Gly) (interchain with G-Cter in SUMO2) linkage.

As to quaternary structure, interacts with ESR1 and ESR2 in the presence of estradiol. Interacts with CTBP1, HDAC3 and HDAC6. Component of a large corepressor complex that contains about 20 proteins, including CTBP1, CTBP2, HDAC1 and HDAC2. As to expression, ubiquitous.

The protein resides in the nucleus. May act as transcription activator that binds DNA elements with the sequence 5'-CCCTATCGATCGATCTCTACCT-3'. Repressor of ligand-dependent transcription activation by target nuclear receptors. Repressor of ligand-dependent transcription activation by ESR1, ESR2, NR3C1, PGR, RARA, RARB, RARG, RXRA and VDR. In Homo sapiens (Human), this protein is Ligand-dependent corepressor.